Reading from the N-terminus, the 215-residue chain is Large ribosomal subunit protein uL3 (215 aa).

The tract at residues 136-155 (GVSISHRSHGSTGQRQDPGK) is disordered. Gln151 is subject to N5-methylglutamine.

This sequence belongs to the universal ribosomal protein uL3 family. As to quaternary structure, part of the 50S ribosomal subunit. Forms a cluster with proteins L14 and L19. In terms of processing, methylated by PrmB.

Its function is as follows. One of the primary rRNA binding proteins, it binds directly near the 3'-end of the 23S rRNA, where it nucleates assembly of the 50S subunit. The sequence is that of Large ribosomal subunit protein uL3 from Rickettsia typhi (strain ATCC VR-144 / Wilmington).